The primary structure comprises 232 residues: Rho-related GTP-binding protein Rho6 (232 aa).

Residues 23–28, 38–45, 67–71, 125–128, and 169–170 each bind GTP; these read QCGKTA, YPETYVPT, DTSGS, CKTD, and AF. The Effector region signature appears at 42–50; the sequence is YVPTVFENY. The residue at position 229 (C229) is a Cysteine methyl ester. A lipid anchor (S-geranylgeranyl cysteine) is attached at C229. Residues 230 to 232 constitute a propeptide, removed in mature form; that stretch reads SIM.

It belongs to the small GTPase superfamily. Rho family. Binds GRB7 and PLXNB1. Interacts with PLXNA2. Interacts with UBXD5.

It localises to the cell membrane. The protein resides in the cytoplasm. Its subcellular location is the cytoskeleton. In terms of biological role, lacks intrinsic GTPase activity. Has a low affinity for GDP, and constitutively binds GTP. Controls rearrangements of the actin cytoskeleton. Induces the Rac-dependent neuritic process formation in part by disruption of the cortical actin filaments. Causes the formation of many neuritic processes from the cell body with disruption of the cortical actin filaments. This Bos taurus (Bovine) protein is Rho-related GTP-binding protein Rho6 (RND1).